The following is a 281-amino-acid chain: MSIAIVTDSTSDLTPEHLAALGVTGVPLYVLFEGQLYQDGVQLSARQLVEGVRAGKAIPSTSQPSPAEFAQAYAQALEHADEVLSLHISGQLSGTVGSARLAAQEFGGRVTVVDTHTVTLGLGLQVLRAAELVRAGQSVPQIVQTLERVYPQADLRFTVDTLDFLRLNGRIGGASALLGGLLNIKPLLVVRGGRVDAGGRVRGQKKALADLAEHVRRYVSQHGGARVAFLATVGGEEDRAAVRAQLSDLHFQDMGDHEIGAVVTVHAGPGAVGVALEPLSA.

In terms of domain architecture, DegV spans 3-278 (IAIVTDSTSD…PGAVGVALEP (276 aa)). Residues Thr-61 and Ser-93 each coordinate hexadecanoate.

Functionally, may bind long-chain fatty acids, such as palmitate, and may play a role in lipid transport or fatty acid metabolism. The sequence is that of DegV domain-containing protein DR_1986 from Deinococcus radiodurans (strain ATCC 13939 / DSM 20539 / JCM 16871 / CCUG 27074 / LMG 4051 / NBRC 15346 / NCIMB 9279 / VKM B-1422 / R1).